The sequence spans 211 residues: ATP phosphoribosyltransferase (211 aa).

Belongs to the ATP phosphoribosyltransferase family. Short subfamily. In terms of assembly, heteromultimer composed of HisG and HisZ subunits.

It localises to the cytoplasm. The catalysed reaction is 1-(5-phospho-beta-D-ribosyl)-ATP + diphosphate = 5-phospho-alpha-D-ribose 1-diphosphate + ATP. The protein operates within amino-acid biosynthesis; L-histidine biosynthesis; L-histidine from 5-phospho-alpha-D-ribose 1-diphosphate: step 1/9. In terms of biological role, catalyzes the condensation of ATP and 5-phosphoribose 1-diphosphate to form N'-(5'-phosphoribosyl)-ATP (PR-ATP). Has a crucial role in the pathway because the rate of histidine biosynthesis seems to be controlled primarily by regulation of HisG enzymatic activity. The chain is ATP phosphoribosyltransferase from Pseudomonas fluorescens (strain SBW25).